The primary structure comprises 709 residues: Coiled-coil domain-containing protein 13 (709 aa).

Coiled-coil stretches lie at residues 70–97 (IFEK…NGRL), 139–178 (ELSK…ASAK), and 206–288 (EVKA…QRQN). Residue S258 is modified to Phosphoserine. Positions 281 to 312 (KQLGQRQNKPAGSSSSEVPLSSDSRKMTAQEK) are disordered. Over residues 293 to 302 (SSSSEVPLSS) the composition is skewed to low complexity. Residues 323–457 (DKQESWEKLA…ELEIGQLSVQ (135 aa)) adopt a coiled-coil conformation. 3 disordered regions span residues 462-499 (KGGG…LGSS), 512-542 (SALT…QAQA), and 600-641 (KMRL…SSTQ). S469 and S532 each carry phosphoserine. A coiled-coil region spans residues 539 to 604 (QAQAAEMKAL…EQHLEKMRLE (66 aa)).

Interacts with PCM1, CEP290 and PCNT.

It is found in the cytoplasm. It localises to the cytoskeleton. The protein resides in the microtubule organizing center. Its subcellular location is the centrosome. The protein localises to the centriolar satellite. It is found in the cilium basal body. Required for primary cilia formation and promotes the localization of the ciliopathy protein BBS4 to both centriolar satellites and cilia. The protein is Coiled-coil domain-containing protein 13 of Mus musculus (Mouse).